The chain runs to 1905 residues: Alpha-2-macroglobulin (1905 aa).

The N-terminal stretch at 1-21 (MNKQYFLSLFSTLAVALTLSG) is a signal peptide. Cys-22 carries the N-palmitoyl cysteine lipid modification. Cys-22 carries the S-diacylglycerol cysteine lipid modification. The segment at residues 1438 to 1441 (CTEQ) is a cross-link (isoglutamyl cysteine thioester (Cys-Gln)).

The protein belongs to the protease inhibitor I39 (alpha-2-macroglobulin) family. Bacterial alpha-2-macroglobulin subfamily.

It is found in the cell membrane. Functionally, protects the bacterial cell from host peptidases. The protein is Alpha-2-macroglobulin of Pasteurella multocida (strain Pm70).